A 277-amino-acid polypeptide reads, in one-letter code: Large ribosomal subunit protein uL2 (277 aa).

Disordered stretches follow at residues 28 to 55 (EPEK…RHRG) and 207 to 277 (KAGR…RTQG). 3 stretches are compositionally biased toward basic residues: residues 34-43 (THHKHSKQGR), 209-220 (GRTRHRGQRPHV), and 255-265 (LGRKTRNKKKR).

The protein belongs to the universal ribosomal protein uL2 family. As to quaternary structure, part of the 50S ribosomal subunit. Forms a bridge to the 30S subunit in the 70S ribosome.

Its function is as follows. One of the primary rRNA binding proteins. Required for association of the 30S and 50S subunits to form the 70S ribosome, for tRNA binding and peptide bond formation. It has been suggested to have peptidyltransferase activity; this is somewhat controversial. Makes several contacts with the 16S rRNA in the 70S ribosome. The polypeptide is Large ribosomal subunit protein uL2 (Microcystis aeruginosa (strain NIES-843 / IAM M-2473)).